Reading from the N-terminus, the 452-residue chain is Pup--protein ligase (452 aa).

Glu-9 is a binding site for Mg(2+). Residue Arg-53 coordinates ATP. Tyr-55 is a binding site for Mg(2+). Asp-57 functions as the Proton acceptor in the catalytic mechanism. Glu-63 contacts Mg(2+). ATP-binding residues include Thr-66 and Trp-419.

It belongs to the Pup ligase/Pup deamidase family. Pup-conjugating enzyme subfamily.

The catalysed reaction is ATP + [prokaryotic ubiquitin-like protein]-L-glutamate + [protein]-L-lysine = ADP + phosphate + N(6)-([prokaryotic ubiquitin-like protein]-gamma-L-glutamyl)-[protein]-L-lysine.. The protein operates within protein degradation; proteasomal Pup-dependent pathway. Its pathway is protein modification; protein pupylation. In terms of biological role, catalyzes the covalent attachment of the prokaryotic ubiquitin-like protein modifier Pup to the proteasomal substrate proteins, thereby targeting them for proteasomal degradation. This tagging system is termed pupylation. The ligation reaction involves the side-chain carboxylate of the C-terminal glutamate of Pup and the side-chain amino group of a substrate lysine. This Geodermatophilus obscurus (strain ATCC 25078 / DSM 43160 / JCM 3152 / CCUG 61914 / KCC A-0152 / KCTC 9177 / NBRC 13315 / NRRL B-3577 / G-20) protein is Pup--protein ligase.